Here is a 420-residue protein sequence, read N- to C-terminus: Histidine--tRNA ligase (420 aa).

The protein belongs to the class-II aminoacyl-tRNA synthetase family. Homodimer.

Its subcellular location is the cytoplasm. It catalyses the reaction tRNA(His) + L-histidine + ATP = L-histidyl-tRNA(His) + AMP + diphosphate + H(+). This chain is Histidine--tRNA ligase, found in Acholeplasma laidlawii (strain PG-8A).